A 300-amino-acid polypeptide reads, in one-letter code: Protoheme IX farnesyltransferase (300 aa).

A run of 8 helical transmembrane segments spans residues 24 to 44 (VTQL…PGMV), 46 to 66 (WHVL…AFAI), 94 to 114 (PQIL…LYTF), 118 to 138 (LTMW…TLLL), 146 to 166 (IVIG…AVTG), 172 to 192 (AWIL…VLAL), 224 to 244 (VILF…VVYL), and 278 to 298 (IVYL…RPLL).

The protein belongs to the UbiA prenyltransferase family. Protoheme IX farnesyltransferase subfamily.

The protein localises to the cell inner membrane. It carries out the reaction heme b + (2E,6E)-farnesyl diphosphate + H2O = Fe(II)-heme o + diphosphate. Its pathway is porphyrin-containing compound metabolism; heme O biosynthesis; heme O from protoheme: step 1/1. Functionally, converts heme B (protoheme IX) to heme O by substitution of the vinyl group on carbon 2 of heme B porphyrin ring with a hydroxyethyl farnesyl side group. The sequence is that of Protoheme IX farnesyltransferase from Burkholderia ambifaria (strain MC40-6).